The primary structure comprises 238 residues: ATP synthase subunit a (238 aa).

Transmembrane regions (helical) follow at residues 18–38 (LTLL…VFWA), 76–96 (YSLL…LGLF), 114–134 (NLAF…IEGV), 166–186 (SLAI…GLIV), and 193–213 (VYWW…SVFI).

The protein belongs to the ATPase A chain family. In terms of assembly, F-type ATPases have 2 components, CF(1) - the catalytic core - and CF(0) - the membrane proton channel. CF(1) has five subunits: alpha(3), beta(3), gamma(1), delta(1), epsilon(1). CF(0) has three main subunits: a(1), b(2) and c(9-12). The alpha and beta chains form an alternating ring which encloses part of the gamma chain. CF(1) is attached to CF(0) by a central stalk formed by the gamma and epsilon chains, while a peripheral stalk is formed by the delta and b chains.

Its subcellular location is the cell membrane. Functionally, key component of the proton channel; it plays a direct role in the translocation of protons across the membrane. This chain is ATP synthase subunit a, found in Streptococcus pyogenes serotype M1.